We begin with the raw amino-acid sequence, 329 residues long: Vitamin B12 import system permease protein BtuC (329 aa).

A run of 9 helical transmembrane segments spans residues 22 to 42 (LSVLMLLAVVLSLCAGDQWIA), 64 to 84 (LAVLLVGAALALSGAVMQALF), 91 to 111 (PGLLGVSNGAGVGLIAAVLLG), 115 to 135 (LPGWALGFCAIAGALIITLIL), 149 to 169 (LLAGVALGIICSAMMTWAIYF), 187 to 207 (GGVDWQQAWLMIALIPVSLWI), 243 to 263 (GWMVGVSVALAGSIGFIGLVI), 277 to 297 (ALLPGCALAGAIALLLADVIA), and 305 to 325 (ELPIGVVTATMGAPVFIWLLL).

This sequence belongs to the binding-protein-dependent transport system permease family. FecCD subfamily. As to quaternary structure, the complex is composed of two ATP-binding proteins (BtuD), two transmembrane proteins (BtuC) and a solute-binding protein (BtuF).

It localises to the cell inner membrane. Part of the ABC transporter complex BtuCDF involved in vitamin B12 import. Involved in the translocation of the substrate across the membrane. This is Vitamin B12 import system permease protein BtuC from Citrobacter koseri (strain ATCC BAA-895 / CDC 4225-83 / SGSC4696).